We begin with the raw amino-acid sequence, 398 residues long: Secreted aspartic protease 3 (398 aa).

The first 18 residues, 1 to 18 (MFLKNIFIALAIALLADA), serve as a signal peptide directing secretion. A propeptide spans 19-58 (TPTTFNNSPGFVALNFDVIKTHKNVTGPQGEINTNVNVKR) (activation peptide). Residue Asn42 is glycosylated (N-linked (GlcNAc...) asparagine). In terms of domain architecture, Peptidase A1 spans 72-384 (YASDITVGSN…DLDDNEISLA (313 aa)). The active site involves Asp90. 90–92 (DTG) lines the pepstatin A pocket. Polar residues predominate over residues 103 to 112 (VSCQAGQGQD). The interval 103 to 139 (VSCQAGQGQDPNFCKNEGTYSPSSSSSSQNLNSPFSI) is disordered. Cys105 and Cys116 form a disulfide bridge. Positions 123-138 (SPSSSSSSQNLNSPFS) are enriched in low complexity. 140-143 (EYGD) lines the pepstatin A pocket. Residues His188, Asp248, His254, and Asp270 each contribute to the Zn(2+) site. Residue Asp274 is part of the active site. Residue 274–278 (DSGTT) participates in pepstatin A binding. A disulfide bond links Cys312 and Cys350. A glycan (N-linked (GlcNAc...) asparagine) is linked at Asn313.

Belongs to the peptidase A1 family. In terms of assembly, monomer.

Its subcellular location is the secreted. It catalyses the reaction Preferential cleavage at the carboxyl of hydrophobic amino acids, but fails to cleave 15-Leu-|-Tyr-16, 16-Tyr-|-Leu-17 and 24-Phe-|-Phe-25 of insulin B chain. Activates trypsinogen, and degrades keratin.. Inhibited by pepstatin A analogs. In terms of biological role, secreted aspartic peptidases (SAPs) are a group of ten acidic hydrolases considered as key virulence factors. These enzymes supply the fungus with nutrient amino acids as well as are able to degrade the selected host's proteins involved in the immune defense. Induces host inflammatory cytokine production in a proteolytic activity-independent way. Moreover, acts toward human hemoglobin though limited proteolysis to generate a variety of antimicrobial hemocidins, enabling to compete with the other microorganisms of the same physiological niche using the microbicidal peptides generated from the host protein. Its function is as follows. Plays a key role in defense against host by cleaving histatin-5 (Hst 5), a peptide from human saliva that carries out fungicidal activity. The cleavage rate decreases in an order of SAP2 &gt; SAP9 &gt; SAP3 &gt; SAP7 &gt; SAP4 &gt; SAP1 &gt; SAP8. The first cleavage occurs between residues 'Lys-17' and 'His-18' of Hst 5, giving DSHAKRHHGYKRKFHEK and HHSHRGY peptides. Simultaneously, the DSHAKRHHGYKRK peptide is also formed. Further fragmentation by SAP3 results in DSHAKRHHGY and KRKFHEK products. This Candida albicans (strain SC5314 / ATCC MYA-2876) (Yeast) protein is Secreted aspartic protease 3.